A 344-amino-acid polypeptide reads, in one-letter code: Sesquiterpene synthase 9 (344 aa).

Mg(2+)-binding residues include D88, N224, S228, and E232. A DDXXD motif motif is present at residues 88–92 (DEYSD). The NSE/DTE motif motif lies at 224-232 (NDMLSWNVE). 2 residues coordinate (2E,6E)-farnesyl diphosphate: R313 and Y314.

Belongs to the terpene synthase family. Requires Mg(2+) as cofactor.

Terpene cyclase that catalyzes the cyclization of farnesyl diphosphate (FPP) to a single major sesquiterpene scaffold whose chemical structure is still unknown. The sequence is that of Sesquiterpene synthase 9 from Postia placenta (strain ATCC 44394 / Madison 698-R) (Brown rot fungus).